A 195-amino-acid polypeptide reads, in one-letter code: MIGRIAGLLLEKHPPLVLVDVNGIGYEIDVPMSTFCRLPGIGEQVTLHTHFWVREDAHLLFGFMTEPERVLFRQLTKISGIGARTGLAILSGLSVNDLHQIVVSQDSTRLTRIPGIGKKTAERLLLELRDKISPAITLPETGTAMASSTDKDILNALSALGYNDREANWAVGQLSEGVTVSDGIMQSLRLLSKAK.

Positions 1 to 64 (MIGRIAGLLL…EDAHLLFGFM (64 aa)) are domain I. The domain II stretch occupies residues 65-140 (TEPERVLFRQ…KISPAITLPE (76 aa)). Residues 140–144 (ETGTA) are flexible linker. Positions 145-195 (MASSTDKDILNALSALGYNDREANWAVGQLSEGVTVSDGIMQSLRLLSKAK) are domain III.

The protein belongs to the RuvA family. Homotetramer. Forms an RuvA(8)-RuvB(12)-Holliday junction (HJ) complex. HJ DNA is sandwiched between 2 RuvA tetramers; dsDNA enters through RuvA and exits via RuvB. An RuvB hexamer assembles on each DNA strand where it exits the tetramer. Each RuvB hexamer is contacted by two RuvA subunits (via domain III) on 2 adjacent RuvB subunits; this complex drives branch migration. In the full resolvosome a probable DNA-RuvA(4)-RuvB(12)-RuvC(2) complex forms which resolves the HJ.

The protein localises to the cytoplasm. Functionally, the RuvA-RuvB-RuvC complex processes Holliday junction (HJ) DNA during genetic recombination and DNA repair, while the RuvA-RuvB complex plays an important role in the rescue of blocked DNA replication forks via replication fork reversal (RFR). RuvA specifically binds to HJ cruciform DNA, conferring on it an open structure. The RuvB hexamer acts as an ATP-dependent pump, pulling dsDNA into and through the RuvAB complex. HJ branch migration allows RuvC to scan DNA until it finds its consensus sequence, where it cleaves and resolves the cruciform DNA. The chain is Holliday junction branch migration complex subunit RuvA from Nitrosomonas europaea (strain ATCC 19718 / CIP 103999 / KCTC 2705 / NBRC 14298).